The sequence spans 432 residues: Adenylosuccinate synthetase (432 aa).

GTP-binding positions include 13 to 19 (GDEGKGK) and 41 to 43 (GHT). Aspartate 14 (proton acceptor) is an active-site residue. 2 residues coordinate Mg(2+): aspartate 14 and glycine 41. IMP-binding positions include 14 to 17 (DEGK), 39 to 42 (NAGH), threonine 130, arginine 144, glutamine 225, threonine 240, and arginine 304. Histidine 42 (proton donor) is an active-site residue. 300–306 (ATTGRKR) serves as a coordination point for substrate. Residues arginine 306, 332–334 (KLD), and 414–416 (STG) contribute to the GTP site.

Belongs to the adenylosuccinate synthetase family. In terms of assembly, homodimer. Requires Mg(2+) as cofactor.

Its subcellular location is the cytoplasm. It carries out the reaction IMP + L-aspartate + GTP = N(6)-(1,2-dicarboxyethyl)-AMP + GDP + phosphate + 2 H(+). It functions in the pathway purine metabolism; AMP biosynthesis via de novo pathway; AMP from IMP: step 1/2. In terms of biological role, plays an important role in the de novo pathway of purine nucleotide biosynthesis. Catalyzes the first committed step in the biosynthesis of AMP from IMP. The chain is Adenylosuccinate synthetase from Alkalilimnicola ehrlichii (strain ATCC BAA-1101 / DSM 17681 / MLHE-1).